We begin with the raw amino-acid sequence, 419 residues long: LWamide neuropeptides (419 aa).

Residues 1–27 (MEKEMRNLMLLVLLTVILDNGIGKCNA) form the signal peptide. The segment at 27–48 (AKSEEDQDGNARNNRIDKNDDN) is disordered. Positions 28 to 104 (KSEEDQDGNA…ENLDIDSTVQ (77 aa)) are excised as a propeptide. A Tryptophan amide modification is found at W110. A propeptide spanning residues 113–140 (EADFDNTRAHDSAQISDEKQSGLWVGDA) is cleaved from the precursor. Basic and acidic residues predominate over residues 120–132 (RAHDSAQISDEKQ). A disordered region spans residues 120-332 (RAHDSAQISD…PGLWGRQVED (213 aa)). W146 carries the tryptophan amide modification. Residues 149–150 (DA) constitute a propeptide that is removed on maturation. W156 carries the tryptophan amide modification. The propeptide occupies 159 to 160 (DA). W166 bears the Tryptophan amide mark. Positions 169 to 170 (DA) are excised as a propeptide. At W176 the chain carries Tryptophan amide. A propeptide spanning residues 179–180 (DA) is cleaved from the precursor. A Tryptophan amide modification is found at W186. A propeptide spanning residues 189–190 (DA) is cleaved from the precursor. W196 carries the tryptophan amide modification. The propeptide occupies 199-200 (DA). W206 carries the post-translational modification Tryptophan amide. A propeptide spanning residues 209 to 210 (DA) is cleaved from the precursor. A Tryptophan amide modification is found at W216. A propeptide spans 218 to 220 (GDA) (seems to have a sequencing error or a mutation in position 218; Gly instead of Arg). At W226 the chain carries Tryptophan amide. Residues 229–230 (DA) constitute a propeptide that is removed on maturation. W236 is subject to Tryptophan amide. A propeptide spanning residues 239 to 240 (DA) is cleaved from the precursor. W246 carries the tryptophan amide modification. Positions 249 to 250 (DA) are excised as a propeptide. A Tryptophan amide modification is found at W256. A propeptide spanning residues 259–260 (DA) is cleaved from the precursor. W266 is modified (tryptophan amide). A propeptide spanning residues 269-270 (DA) is cleaved from the precursor. W276 carries the tryptophan amide modification. Residues 279 to 280 (DT) constitute a propeptide that is removed on maturation. Residue W286 is modified to Tryptophan amide. A propeptide spanning residues 289 to 290 (DA) is cleaved from the precursor. W296 is modified (tryptophan amide). 2 propeptides span residues 299 to 300 (DA) and 309 to 320 (DNNVIKSRSDDA). A Tryptophan amide modification is found at W326. Residues 329 to 419 (QVEDGPTKIW…RRNNKKNNKF (91 aa)) constitute a propeptide that is removed on maturation.

This sequence belongs to the LWamide neuropeptide family. As to expression, in planula larvae, expressed in a narrow ring of ectodermal neurosensory cells around the widest circumference at the anterior of the larvae. In primary polyps, expression is confined to endodermal cells of the hypostome. In mature polyps, expression is strong in the epidermis from the tentacle level to the base of the polyp and weak in the gastrodermal cells in the apical hypostome.

Its subcellular location is the secreted. In terms of biological role, LWamide peptides may be involved in induction of metamorphosis. The protein is LWamide neuropeptides of Hydractinia echinata (Snail fur).